Here is a 213-residue protein sequence, read N- to C-terminus: Transmembrane protein 186 (213 aa).

The Mitochondrial matrix portion of the chain corresponds to 1 to 79; the sequence is MAALLRAVRR…FLSRLKLAQT (79 aa). Residues 80-100 traverse the membrane as a helical segment; that stretch reads ALTVVALPPGYYLYSQGLLTL. The Mitochondrial intermembrane segment spans residues 101-102; the sequence is NT. Residues 103 to 123 traverse the membrane as a helical segment; that stretch reads VCLMSGISGFALTMLCWMSYF. The Mitochondrial matrix portion of the chain corresponds to 124–213; the sequence is LRRLVGILYL…QVFGVHQMLK (90 aa).

It belongs to the TMEM186 family. In terms of assembly, part of the mitochondrial complex I assembly/MCIA complex that comprises at least the core subunits TMEM126B, NDUFAF1, ECSIT and ACAD9 and complement subunits such as COA1 and TMEM186. Interacts with MT-ND3.

It localises to the mitochondrion inner membrane. Functionally, as part of the MCIA complex, required for efficient assembly of the mitochondrial complex I. The sequence is that of Transmembrane protein 186 from Homo sapiens (Human).